The primary structure comprises 322 residues: Transmembrane protein 171 (322 aa).

A run of 4 helical transmembrane segments spans residues 22–42 (IFFL…LSIF), 57–77 (IVLK…VILA), 112–132 (LIFG…GIWV), and 159–179 (FLSL…FFVV). Residues 223-322 (PPPYFPESSA…LGAPSDASPP (100 aa)) are disordered. A compositionally biased stretch (low complexity) spans 228 to 241 (PESSAAAPSPGANS). Polar residues-rich tracts occupy residues 242 to 267 (LHQI…NQGA) and 279 to 289 (ISGQGSSSERS).

The protein resides in the membrane. The chain is Transmembrane protein 171 (Tmem171) from Mus musculus (Mouse).